The sequence spans 86 residues: Large ribosomal subunit protein bL27 (86 aa).

The disordered stretch occupies residues 1–24; it reads MATKKAGGSSRNGRDSAGRRLGVK.

It belongs to the bacterial ribosomal protein bL27 family.

The chain is Large ribosomal subunit protein bL27 from Rickettsia conorii (strain ATCC VR-613 / Malish 7).